The chain runs to 250 residues: 5'-nucleotidase SurE (250 aa).

Asp-8, Asp-9, Ser-40, and Asn-92 together coordinate a divalent metal cation.

Belongs to the SurE nucleotidase family. The cofactor is a divalent metal cation.

Its subcellular location is the cytoplasm. The catalysed reaction is a ribonucleoside 5'-phosphate + H2O = a ribonucleoside + phosphate. Its function is as follows. Nucleotidase that shows phosphatase activity on nucleoside 5'-monophosphates. This chain is 5'-nucleotidase SurE, found in Dichelobacter nodosus (strain VCS1703A).